We begin with the raw amino-acid sequence, 203 residues long: Holliday junction branch migration complex subunit RuvA (203 aa).

The tract at residues 1 to 63 (MIVSLRGTVE…EESQTLYGFT (63 aa)) is domain I. The interval 64 to 142 (DDASRRMFVL…GFNDGIPAAA (79 aa)) is domain II. The tract at residues 143–150 (QPQLSIAV) is flexible linker. A domain III region spans residues 150–203 (VDQAVQEQVLEALVGLGFSEKIALPVLSRVLRDSPELSKSQALRAALSELGTKN).

Belongs to the RuvA family. Homotetramer. Forms an RuvA(8)-RuvB(12)-Holliday junction (HJ) complex. HJ DNA is sandwiched between 2 RuvA tetramers; dsDNA enters through RuvA and exits via RuvB. An RuvB hexamer assembles on each DNA strand where it exits the tetramer. Each RuvB hexamer is contacted by two RuvA subunits (via domain III) on 2 adjacent RuvB subunits; this complex drives branch migration. In the full resolvosome a probable DNA-RuvA(4)-RuvB(12)-RuvC(2) complex forms which resolves the HJ.

It localises to the cytoplasm. Functionally, the RuvA-RuvB-RuvC complex processes Holliday junction (HJ) DNA during genetic recombination and DNA repair, while the RuvA-RuvB complex plays an important role in the rescue of blocked DNA replication forks via replication fork reversal (RFR). RuvA specifically binds to HJ cruciform DNA, conferring on it an open structure. The RuvB hexamer acts as an ATP-dependent pump, pulling dsDNA into and through the RuvAB complex. HJ branch migration allows RuvC to scan DNA until it finds its consensus sequence, where it cleaves and resolves the cruciform DNA. The protein is Holliday junction branch migration complex subunit RuvA of Corynebacterium diphtheriae (strain ATCC 700971 / NCTC 13129 / Biotype gravis).